Reading from the N-terminus, the 478-residue chain is Lysosome membrane protein 2 (478 aa).

Residues 1–4 lie on the Cytoplasmic side of the membrane; sequence MGRC. Residues 5–27 form a helical membrane-spanning segment; that stretch reads CFYTAGTLSLLLLVTSVTLLVAR. Over 28-433 the chain is Lumenal; the sequence is VFQKAVDQTI…QLKSVINTTL (406 aa). Residues asparagine 45, asparagine 68, asparagine 105, and asparagine 122 are each glycosylated (N-linked (GlcNAc...) asparagine). Positions 155 to 191 are important for interaction with GBA1; it reads LIEAMLKAYQQKLFVIHTVHELLWGYKDEILSLVHIF. Residues asparagine 206, asparagine 224, asparagine 249, and asparagine 304 are each glycosylated (N-linked (GlcNAc...) asparagine). Disulfide bonds link cysteine 274–cysteine 329 and cysteine 312–cysteine 318. Asparagine 325, asparagine 412, and asparagine 430 each carry an N-linked (GlcNAc...) asparagine glycan. A helical membrane pass occupies residues 434-459; the sequence is VVTNIPYIIMALGVFFGLVFTWLACR. Topologically, residues 460–478 are cytoplasmic; the sequence is GQGSMDEGTADERAPLIRT.

This sequence belongs to the CD36 family. As to quaternary structure, interacts with GBA1. Acylated by palmitic acid group(s). In terms of processing, heavily glycosylated. As to expression, detected in the extracts of brain, heart, lung, liver and kidney.

It localises to the lysosome membrane. Functionally, acts as a lysosomal receptor for glucosylceramidase (GBA1) targeting. The chain is Lysosome membrane protein 2 (Scarb2) from Mus musculus (Mouse).